A 286-amino-acid chain; its full sequence is 3-hydroxyanthranilate 3,4-dioxygenase (286 aa).

The domain A (catalytic) stretch occupies residues 1-160 (MERPVRVKAW…SEQYRTGKPN (160 aa)). Arginine 43 contributes to the O2 binding site. Histidine 47, glutamate 53, and histidine 91 together coordinate Fe cation. Glutamate 53 provides a ligand contact to substrate. Arginine 95 and glutamate 105 together coordinate substrate. The interval 161–177 (PDQLLKEPPFPLSTRSV) is linker. Residues 178 to 286 (MEPMCLEAWL…QDPACKKSLG (109 aa)) form a domain B region.

Belongs to the 3-HAO family. In terms of assembly, monomer. Requires Fe(2+) as cofactor.

The protein resides in the cytoplasm. It localises to the cytosol. The catalysed reaction is 3-hydroxyanthranilate + O2 = (2Z,4Z)-2-amino-3-carboxymuconate 6-semialdehyde. Its pathway is cofactor biosynthesis; NAD(+) biosynthesis; quinolinate from L-kynurenine: step 3/3. Catalyzes the oxidative ring opening of 3-hydroxyanthranilate to 2-amino-3-carboxymuconate semialdehyde, which spontaneously cyclizes to quinolinate. This is 3-hydroxyanthranilate 3,4-dioxygenase from Bos taurus (Bovine).